The primary structure comprises 184 residues: ATP synthase subunit b, chloroplastic (184 aa).

Residues 27 to 49 form a helical membrane-spanning segment; the sequence is LATNPINLSVVFGVLIFFGKGVL.

Belongs to the ATPase B chain family. F-type ATPases have 2 components, F(1) - the catalytic core - and F(0) - the membrane proton channel. F(1) has five subunits: alpha(3), beta(3), gamma(1), delta(1), epsilon(1). F(0) has four main subunits: a(1), b(1), b'(1) and c(10-14). The alpha and beta chains form an alternating ring which encloses part of the gamma chain. F(1) is attached to F(0) by a central stalk formed by the gamma and epsilon chains, while a peripheral stalk is formed by the delta, b and b' chains.

It is found in the plastid. It localises to the chloroplast thylakoid membrane. In terms of biological role, f(1)F(0) ATP synthase produces ATP from ADP in the presence of a proton or sodium gradient. F-type ATPases consist of two structural domains, F(1) containing the extramembraneous catalytic core and F(0) containing the membrane proton channel, linked together by a central stalk and a peripheral stalk. During catalysis, ATP synthesis in the catalytic domain of F(1) is coupled via a rotary mechanism of the central stalk subunits to proton translocation. Its function is as follows. Component of the F(0) channel, it forms part of the peripheral stalk, linking F(1) to F(0). This chain is ATP synthase subunit b, chloroplastic, found in Arabidopsis thaliana (Mouse-ear cress).